The sequence spans 232 residues: Phosphatidylserine decarboxylase proenzyme (232 aa).

Serine 190 acts as the Schiff-base intermediate with substrate; via pyruvic acid in catalysis. Serine 190 is subject to Pyruvic acid (Ser); by autocatalysis.

It belongs to the phosphatidylserine decarboxylase family. PSD-A subfamily. In terms of assembly, heterodimer of a large membrane-associated beta subunit and a small pyruvoyl-containing alpha subunit. It depends on pyruvate as a cofactor. Is synthesized initially as an inactive proenzyme. Formation of the active enzyme involves a self-maturation process in which the active site pyruvoyl group is generated from an internal serine residue via an autocatalytic post-translational modification. Two non-identical subunits are generated from the proenzyme in this reaction, and the pyruvate is formed at the N-terminus of the alpha chain, which is derived from the carboxyl end of the proenzyme. The post-translation cleavage follows an unusual pathway, termed non-hydrolytic serinolysis, in which the side chain hydroxyl group of the serine supplies its oxygen atom to form the C-terminus of the beta chain, while the remainder of the serine residue undergoes an oxidative deamination to produce ammonia and the pyruvoyl prosthetic group on the alpha chain.

Its subcellular location is the cell membrane. The catalysed reaction is a 1,2-diacyl-sn-glycero-3-phospho-L-serine + H(+) = a 1,2-diacyl-sn-glycero-3-phosphoethanolamine + CO2. The protein operates within phospholipid metabolism; phosphatidylethanolamine biosynthesis; phosphatidylethanolamine from CDP-diacylglycerol: step 2/2. Functionally, catalyzes the formation of phosphatidylethanolamine (PtdEtn) from phosphatidylserine (PtdSer). This chain is Phosphatidylserine decarboxylase proenzyme, found in Afipia carboxidovorans (strain ATCC 49405 / DSM 1227 / KCTC 32145 / OM5) (Oligotropha carboxidovorans).